The sequence spans 203 residues: Pyridoxine/pyridoxamine 5'-phosphate oxidase (203 aa).

FMN contacts are provided by residues 50-55, 65-66, K71, K72, and Q94; these read RMVLLK and YT. K55 lines the substrate pocket. Residues Y112, R116, and S120 each coordinate substrate. Residues 129–130 and W174 contribute to the FMN site; that span reads QS. 180-182 is a binding site for substrate; that stretch reads RLH. Residue R184 participates in FMN binding.

The protein belongs to the pyridoxamine 5'-phosphate oxidase family. In terms of assembly, homodimer. Requires FMN as cofactor.

It catalyses the reaction pyridoxamine 5'-phosphate + O2 + H2O = pyridoxal 5'-phosphate + H2O2 + NH4(+). The enzyme catalyses pyridoxine 5'-phosphate + O2 = pyridoxal 5'-phosphate + H2O2. The protein operates within cofactor metabolism; pyridoxal 5'-phosphate salvage; pyridoxal 5'-phosphate from pyridoxamine 5'-phosphate: step 1/1. Its pathway is cofactor metabolism; pyridoxal 5'-phosphate salvage; pyridoxal 5'-phosphate from pyridoxine 5'-phosphate: step 1/1. Its function is as follows. Catalyzes the oxidation of either pyridoxine 5'-phosphate (PNP) or pyridoxamine 5'-phosphate (PMP) into pyridoxal 5'-phosphate (PLP). This chain is Pyridoxine/pyridoxamine 5'-phosphate oxidase, found in Brucella canis (strain ATCC 23365 / NCTC 10854 / RM-666).